A 503-amino-acid polypeptide reads, in one-letter code: MAIWAKAEAWLAGPWLALNRARTLGTRAVLAPKGVLPFEAIPQFPGKKWMRVLQLWREQGFENNHLEMHQTFQELGPIFRFDVGGRNMVLVMLPEDVERCQKVEGLHPQRDVPGPWLAYRHLRGHKCGVFLLNGPTWRLDRLQLNPGVLSLQAMQKFTPLVDGVARDFSQALRARVMQNARGSLTLDIKPSIFRYTIEASNLVLFGERLGLLAHQPNPESLDFIHALEVMFKSTVQLMFMPRSLSRWTSTGTWKEHFEAWDCIFQYANKAIQRLYQELTLGHPWHYSGVVAELLTHANMTVDAIKANSIDLTAGSVDTTAYPLLMTLFELARNPEVQQALRQESLAAAARISENPQKAITELPLLRAALKETLRLYPVGIFLDRCVTSDLVLQNYHIPAGTLVKVLLYSLGRNPAVFARPERYHPQRWLDNQGSGTRFPHLAFGFGMRQCLGRRLAQVEMLLLLHHVLKNFLVETLVQEDIKMIYRFIMTPSTLPLLTFRAIS.

Residues 1–24 (MAIWAKAEAWLAGPWLALNRARTL) constitute a mitochondrion transit peptide. Residue C450 participates in heme binding.

Belongs to the cytochrome P450 family. The cofactor is heme.

Its subcellular location is the mitochondrion inner membrane. It carries out the reaction a steroid + 2 reduced [adrenodoxin] + O2 + 2 H(+) = an 11beta-hydroxysteroid + 2 oxidized [adrenodoxin] + H2O. The enzyme catalyses 11-deoxycortisol + 2 reduced [adrenodoxin] + O2 + 2 H(+) = cortisol + 2 oxidized [adrenodoxin] + H2O. It catalyses the reaction 21-hydroxyprogesterone + 2 reduced [adrenodoxin] + O2 + 2 H(+) = corticosterone + 2 oxidized [adrenodoxin] + H2O. The catalysed reaction is corticosterone + 2 reduced [adrenodoxin] + O2 + 2 H(+) = 18-hydroxycorticosterone + 2 oxidized [adrenodoxin] + H2O. It carries out the reaction 18-hydroxycorticosterone + 2 reduced [adrenodoxin] + O2 + 2 H(+) = aldosterone + 2 oxidized [adrenodoxin] + 2 H2O. The enzyme catalyses 21-hydroxyprogesterone + 2 reduced [adrenodoxin] + O2 + 2 H(+) = 19-hydroxy-11-deoxycorticosterone + 2 oxidized [adrenodoxin] + H2O. It catalyses the reaction 19-hydroxy-11-deoxycorticosterone + 2 reduced [adrenodoxin] + O2 + 2 H(+) = 19-oxo-11-deoxycorticosterone + 2 oxidized [adrenodoxin] + 2 H2O. Its pathway is steroid biosynthesis; glucocorticoid biosynthesis. It participates in steroid hormone biosynthesis. Its function is as follows. A cytochrome P450 monooxygenase that catalyzes the biosynthesis of aldosterone and other adrenal corticoids. Differing from other species (such as human, rat and mice), it is able to catalyze three sequential oxidative reactions of 11-deoxycorticosterone (21-hydroxyprogesterone), namely 11-beta hydroxylation, followed by two successive oxidations at C18 yielding 18-hydroxy and then 18-oxo intermediates, and ending with the formation of aldosterone. Steroid 11beta, 18- and 19-hydroxylase. Mechanistically, uses molecular oxygen inserting one oxygen atom into a substrate and reducing the second into a water molecule. Two electrons are provided by NADPH via a two-protein mitochondrial transfer system comprising flavoprotein FDXR (adrenodoxin/ferredoxin reductase) and nonheme iron-sulfur protein FDX1 or FDX2 (adrenodoxin/ferredoxin). This chain is Cytochrome P450 11B1, mitochondrial (CYP11B1), found in Sus scrofa (Pig).